Consider the following 594-residue polypeptide: ATP-dependent lipid A-core flippase (594 aa).

6 helical membrane passes run 35 to 55 (FVLA…IPKV), 64 to 84 (FGGS…GVAL), 135 to 155 (AVIF…ITLV), 161 to 181 (VVAL…VVAV), 262 to 282 (VTAF…MIQA), and 289 to 309 (IGGF…LKHL). The ABC transmembrane type-1 domain maps to 36-318 (VLAIIAMGLV…LADLNQPLQR (283 aa)). The ABC transporter domain maps to 350-588 (LVFDNVGFRY…NGLYAGLHRI (239 aa)). ATP is bound at residue 384–391 (GPSGSGKT).

The protein belongs to the ABC transporter superfamily. Lipid exporter (TC 3.A.1.106) family. Homodimer.

It localises to the cell inner membrane. The catalysed reaction is ATP + H2O + lipid A-core oligosaccharideSide 1 = ADP + phosphate + lipid A-core oligosaccharideSide 2.. Functionally, involved in lipopolysaccharide (LPS) biosynthesis. Translocates lipid A-core from the inner to the outer leaflet of the inner membrane. Transmembrane domains (TMD) form a pore in the inner membrane and the ATP-binding domain (NBD) is responsible for energy generation. The chain is ATP-dependent lipid A-core flippase from Cupriavidus metallidurans (strain ATCC 43123 / DSM 2839 / NBRC 102507 / CH34) (Ralstonia metallidurans).